The primary structure comprises 67 residues: Conotoxin Cal6.35 (67 aa).

A signal peptide spans methionine 1 to alanine 22. Disulfide bonds link cysteine 43–cysteine 53, cysteine 46–cysteine 59, and cysteine 52–cysteine 66.

The protein belongs to the conotoxin O1 superfamily. Expressed by the venom duct.

It localises to the secreted. Functionally, probable neurotoxin. The protein is Conotoxin Cal6.35 of Californiconus californicus (California cone).